The following is a 350-amino-acid chain: tRNA N6-adenosine threonylcarbamoyltransferase (350 aa).

Fe cation is bound by residues His113 and His117. Substrate-binding positions include 135–139 (LVSGG), Asp169, Gly182, Asp186, and Asn282. Asp310 contacts Fe cation.

It belongs to the KAE1 / TsaD family. Fe(2+) serves as cofactor.

It localises to the cytoplasm. It catalyses the reaction L-threonylcarbamoyladenylate + adenosine(37) in tRNA = N(6)-L-threonylcarbamoyladenosine(37) in tRNA + AMP + H(+). Its function is as follows. Required for the formation of a threonylcarbamoyl group on adenosine at position 37 (t(6)A37) in tRNAs that read codons beginning with adenine. Is involved in the transfer of the threonylcarbamoyl moiety of threonylcarbamoyl-AMP (TC-AMP) to the N6 group of A37, together with TsaE and TsaB. TsaD likely plays a direct catalytic role in this reaction. The sequence is that of tRNA N6-adenosine threonylcarbamoyltransferase from Corynebacterium diphtheriae (strain ATCC 700971 / NCTC 13129 / Biotype gravis).